The primary structure comprises 1118 residues: Protein translocase subunit SecA (1118 aa).

ATP contacts are provided by residues Q176, 194-198, and D693; that span reads GEGKT. A disordered region spans residues 1034–1056; sequence QQPVQQPKYRETKDEAGSAFGGG.

This sequence belongs to the SecA family. Monomer and homodimer. Part of the essential Sec protein translocation apparatus which comprises SecA, SecYEG and auxiliary proteins SecDF. Other proteins may also be involved.

The protein resides in the cell inner membrane. It is found in the cytoplasm. The catalysed reaction is ATP + H2O + cellular proteinSide 1 = ADP + phosphate + cellular proteinSide 2.. Its function is as follows. Part of the Sec protein translocase complex. Interacts with the SecYEG preprotein conducting channel. Has a central role in coupling the hydrolysis of ATP to the transfer of proteins into and across the cell membrane, serving as an ATP-driven molecular motor driving the stepwise translocation of polypeptide chains across the membrane. The polypeptide is Protein translocase subunit SecA (Cytophaga hutchinsonii (strain ATCC 33406 / DSM 1761 / CIP 103989 / NBRC 15051 / NCIMB 9469 / D465)).